Here is a 122-residue protein sequence, read N- to C-terminus: Large ribosomal subunit protein bL12 (122 aa).

Belongs to the bacterial ribosomal protein bL12 family. In terms of assembly, homodimer. Part of the ribosomal stalk of the 50S ribosomal subunit. Forms a multimeric L10(L12)X complex, where L10 forms an elongated spine to which 2 to 4 L12 dimers bind in a sequential fashion. Binds GTP-bound translation factors.

Its function is as follows. Forms part of the ribosomal stalk which helps the ribosome interact with GTP-bound translation factors. Is thus essential for accurate translation. This chain is Large ribosomal subunit protein bL12, found in Levilactobacillus brevis (strain ATCC 367 / BCRC 12310 / CIP 105137 / JCM 1170 / LMG 11437 / NCIMB 947 / NCTC 947) (Lactobacillus brevis).